A 192-amino-acid chain; its full sequence is Ras-like GTP-binding protein O-RHO (192 aa).

Residue 12–19 (GDGACGKT) participates in GTP binding. Residues 34 to 42 (YVPTVFENY) carry the Effector region motif. GTP-binding positions include 59–63 (DTAGQ) and 117–120 (NKKT). Cys-189 carries the post-translational modification Cysteine methyl ester. The S-geranylgeranyl cysteine moiety is linked to residue Cys-189. The propeptide at 190-192 (LLL) is removed in mature form.

It belongs to the small GTPase superfamily. Rho family.

Its subcellular location is the cell membrane. The chain is Ras-like GTP-binding protein O-RHO from Diplobatis ommata (Ocellated electric ray).